The sequence spans 299 residues: Superkiller complex protein 8 (299 aa).

WD repeat units lie at residues 11 to 48 (AHEDGIWCVKWQGDIIATGGMGTKVKTWHGNQPQFLTE), 54 to 93 (KHILGVTSLDIDIGARYLATGGMDGTVRLFDLSTNTLHKT), 96 to 135 (SGPLGCLKIGFLNSANNLVSVSESGNISIYSVETGEKLRS), 138 to 177 (NTNKQVLTMAISPNNEQIAVAGLDGTVLCYDVESGRRVSE), 180 to 219 (AHGVPIRSLCFSSDSKTIFTGAEDSQIRLHDPNSSNPYIA), 223 to 263 (GHSS…LDSS), and 266 to 299 (AHADQTWDLAFSPDSTKLVSVSDDCSIHSYALKQ).

This sequence belongs to the SKI8 family.

The sequence is that of Superkiller complex protein 8 (skic8) from Dictyostelium discoideum (Social amoeba).